Consider the following 408-residue polypeptide: GDSL esterase/lipase At1g54790 (408 aa).

Residues 1-24 form the signal peptide; the sequence is MNITKMKLFYVILFFISSLQISNS. Residue Ser-38 is the Nucleophile of the active site. Residues Asn-273, Asn-289, and Asn-361 are each glycosylated (N-linked (GlcNAc...) asparagine). Catalysis depends on residues Asp-370 and His-373.

Belongs to the 'GDSL' lipolytic enzyme family.

The protein resides in the secreted. This chain is GDSL esterase/lipase At1g54790, found in Arabidopsis thaliana (Mouse-ear cress).